The chain runs to 304 residues: Non-specific ribonucleoside hydrolase RihC (304 aa).

Residue His233 is part of the active site.

The protein belongs to the IUNH family. RihC subfamily.

In terms of biological role, hydrolyzes both purine and pyrimidine ribonucleosides with a broad-substrate specificity. The sequence is that of Non-specific ribonucleoside hydrolase RihC from Escherichia coli (strain SE11).